The chain runs to 2767 residues: Serine/threonine-protein kinase ATM (2767 aa).

The 605-residue stretch at 1713 to 2317 (NVVMASNHCQ…FYQLYPLVFA (605 aa)) folds into the FAT domain. In terms of domain architecture, PI3K/PI4K catalytic spans 2419 to 2734 (WTNETTQCGG…KLDGREAGTM (316 aa)). The segment at 2425–2431 (QCGGLNA) is G-loop. The segment at 2601–2609 (GLGDRHTQN) is catalytic loop. The segment at 2621–2645 (HIDFGIAFEQGKIQTTPETVPFRLT) is activation loop. The 33-residue stretch at 2735–2767 (GDSNVEAQVERLINEATLPSNLCMLFPGWDPHL) folds into the FATC domain.

It belongs to the PI3/PI4-kinase family. ATM subfamily.

Its subcellular location is the nucleus. It is found in the chromosome. It localises to the telomere. The enzyme catalyses L-seryl-[protein] + ATP = O-phospho-L-seryl-[protein] + ADP + H(+). It catalyses the reaction L-threonyl-[protein] + ATP = O-phospho-L-threonyl-[protein] + ADP + H(+). Serine/threonine-protein kinase which recognizes the substrate consensus sequence [ST]-Q. Required to suppress spontaneous apoptosis of proliferating cells during development, and for their proper differentiation. Required for female fertility. Protects telomeres from fusion, maybe by recruiting or maintaining chromatin-modifying complexes such as Su(var)205/HP1. May activate checkpoint signaling in response to DNA double-stranded breaks induced by low-dose ionizing radiation. May phosphorylate histone H2AV. The protein is Serine/threonine-protein kinase ATM (tefu) of Drosophila melanogaster (Fruit fly).